A 39-amino-acid polypeptide reads, in one-letter code: Contryphan-Cal1 (39 aa).

A signal peptide spans Met-1–Ser-20. A disulfide bond links Cys-29 and Cys-35.

As to expression, expressed by the venom duct.

Its subcellular location is the secreted. In terms of biological role, probable neurotoxin. The sequence is that of Contryphan-Cal1 from Californiconus californicus (California cone).